A 508-amino-acid polypeptide reads, in one-letter code: Photosystem II CP47 reaction center protein (508 aa).

6 consecutive transmembrane segments (helical) span residues 21 to 36, 101 to 115, 140 to 156, 203 to 218, 237 to 252, and 457 to 472; these read AVHI…WAGS, IVFS…IWHW, GIHL…FGAF, IAAG…FHLS, VLSS…AFVV, and SFAL…HGAR.

This sequence belongs to the PsbB/PsbC family. PsbB subfamily. As to quaternary structure, PSII is composed of 1 copy each of membrane proteins PsbA, PsbB, PsbC, PsbD, PsbE, PsbF, PsbH, PsbI, PsbJ, PsbK, PsbL, PsbM, PsbT, PsbX, PsbY, PsbZ, Psb30/Ycf12, at least 3 peripheral proteins of the oxygen-evolving complex and a large number of cofactors. It forms dimeric complexes. It depends on Binds multiple chlorophylls. PSII binds additional chlorophylls, carotenoids and specific lipids. as a cofactor.

The protein localises to the plastid. It localises to the chloroplast thylakoid membrane. Functionally, one of the components of the core complex of photosystem II (PSII). It binds chlorophyll and helps catalyze the primary light-induced photochemical processes of PSII. PSII is a light-driven water:plastoquinone oxidoreductase, using light energy to abstract electrons from H(2)O, generating O(2) and a proton gradient subsequently used for ATP formation. The protein is Photosystem II CP47 reaction center protein of Ranunculus macranthus (Large buttercup).